Here is a 190-residue protein sequence, read N- to C-terminus: Female-specific histamine-binding protein 2 (190 aa).

The first 19 residues, 1-19 (MKLLILSLALVLALSQVKG), serve as a signal peptide directing secretion. Positions 39, 43, 55, 58, 61, 101, 117, 119, 127, 139, 154, and 156 each coordinate histamine. Cystine bridges form between Cys67–Cys188 and Cys138–Cys167.

It belongs to the calycin superfamily. Histamine-binding salivary protein family. As to quaternary structure, monomer. Expressed in salivary glands.

The protein resides in the secreted. Its function is as follows. Salivary tick protein that acts by scavenging histamine at the wound site, outcompeting histamine receptors for histamine, thereby overcoming host inflammatory responses. Binds histamine with a high-affinity (Kd=1.7 nM). Contains two binding histamine sites (H and L), that appear to bind histamine with differing affinities (high and low). The chain is Female-specific histamine-binding protein 2 from Rhipicephalus appendiculatus (Brown ear tick).